A 292-amino-acid chain; its full sequence is Ribosomal protein L11 methyltransferase (292 aa).

4 residues coordinate S-adenosyl-L-methionine: Thr143, Gly164, Asp186, and Asn228.

It belongs to the methyltransferase superfamily. PrmA family.

The protein resides in the cytoplasm. The enzyme catalyses L-lysyl-[protein] + 3 S-adenosyl-L-methionine = N(6),N(6),N(6)-trimethyl-L-lysyl-[protein] + 3 S-adenosyl-L-homocysteine + 3 H(+). Functionally, methylates ribosomal protein L11. The chain is Ribosomal protein L11 methyltransferase from Aeromonas salmonicida (strain A449).